The primary structure comprises 712 residues: Polyribonucleotide nucleotidyltransferase (712 aa).

Asp487 and Asp493 together coordinate Mg(2+). A KH domain is found at 554 to 613 (PRIEVMNIPVDKIREVIGSGGKVIREIVEKTGAKINIEDDGTVKIASSSGKEIEAARKWI). The S1 motif domain maps to 623 to 691 (GQIYEGTVVK…ERGKVRLSMK (69 aa)).

It belongs to the polyribonucleotide nucleotidyltransferase family. Mg(2+) serves as cofactor.

The protein resides in the cytoplasm. It carries out the reaction RNA(n+1) + phosphate = RNA(n) + a ribonucleoside 5'-diphosphate. Involved in mRNA degradation. Catalyzes the phosphorolysis of single-stranded polyribonucleotides processively in the 3'- to 5'-direction. The polypeptide is Polyribonucleotide nucleotidyltransferase (Rhizobium etli (strain CIAT 652)).